We begin with the raw amino-acid sequence, 106 residues long: Small cardioactive peptide-related peptide (106 aa).

The signal sequence occupies residues 1–20 (MFCKHLSFVAITICFLLVLA). A propeptide spans 21-41 (KTENEIQQKNIKFDQRTWRNM) (amino-terminal spacer peptide). Q52 bears the Glutamine amide mark. The propeptide at 55-106 (SDNQPDYTCCGMPLTKYVGICPIGMECCPGLKKVLQKSGQRTIYSVCVADAY) is carboxy-terminal spacer peptide.

Expression is seen in the peripheral and central nervous systems in tissues such as the brain, the inferior buccal ganglion, the gastric ganglion, the olfactory lobe, the peduncle lobe and the optic lobe. Expression in the brain is distributed in the median inferior frontal lobe, the superior buccal lobe, the prebranchial lobe and the pedal lobe. Not expressed in the vasomotor lobe or the palliovisceral lobe that controls the cardiac system.

The protein resides in the secreted. In terms of biological role, evokes contractions in the radula protractor muscle, and may regulate feeding behavior and gut motility by controlling muscle contraction of the buccal mass. In Octopus vulgaris (Common octopus), this protein is Small cardioactive peptide-related peptide.